Consider the following 809-residue polypeptide: MSGPKLDRTPSIRDRVEDTLHAHRNELVALLSKYVSQGKGILQPHHILDALDEVQSSGGRALVEGPFLDVLRSAQEAIVLPPFVAIAVRPRPGVWEYVRVNVHELSVEQLTVSEYLRFKEELVDGQYNDPYILELDFEPFNASVPRPNRSSSIGNGVQFLNRHLSSIMFRNKDCLEPLLDFLRGHRHKGHVMMLNDRIQSLGRLQSVLTKAEEHLSKLPADTPYSQFAYKFQEWGLEKGWGDTAGYVLEMIHLLLDVLQAPDPSTLETFLGRIPMIFNVVVVSPHGYFGQANVLGLPDTGGQIVYILDQVRALENEMVLRLKKQGLDFTPKILIVTRLIPEAKGTSCNQRLERISGTQHTYILRVPFRNENGILRKWISRFDVWPYLEKFAEDAAGEIAAELQGTPDFIIGNYSDGNLVASLLSYKMGITQCNIAHALEKTKYPDSDIYWTKYDEKYHFSCQFTADIIAMNNADFIITSTYQEIAGSKNTVGQYESHTAFTLPGLYRIVHGIDVFDPKFNIVSPGADMSIYFPYTEKAKRLTSLHGSLENLISDPEQNDEHIGHLDDRSKPILFSMARLDRVKNITGLVEAYAKNARLRELVNLVVVAGYNDVKKSKDREEIAEIEKMHELIKTYNLFGQFRWISAQTNRARNGELYRYIADTHGAFVQPAFYEAFGLTVVEAMTCGLPTFATVHGGPAEIIEHGISGFHIDPYHPDQAANLIADFFEQCKQDPNHWVEVSNRGLQRIYEKYTWKIYSERLMTLAGVYGFWKYVSKLERRETRRYLEMFYILKFRELAKTVPLAVDEAH.

The tract at residues 275–753 is GT-B glycosyltransferase; it reads MIFNVVVVSP…GLQRIYEKYT (479 aa).

This sequence belongs to the glycosyltransferase 1 family. Plant sucrose synthase subfamily. As to expression, predominantly expressed in the leaf tissues and in caryopses.

It carries out the reaction an NDP-alpha-D-glucose + D-fructose = a ribonucleoside 5'-diphosphate + sucrose + H(+). Its function is as follows. Sucrose-cleaving enzyme that provides UDP-glucose and fructose for various metabolic pathways. The sequence is that of Sucrose synthase 4 (SUS4) from Oryza sativa subsp. japonica (Rice).